Consider the following 316-residue polypeptide: Acetyl-coenzyme A carboxylase carboxyl transferase subunit beta, chloroplastic (316 aa).

Residues 47-316 (LWTRCDNCEN…CKKFQNSFFK (270 aa)) form the CoA carboxyltransferase N-terminal domain. The Zn(2+) site is built by Cys51, Cys54, Cys70, and Cys73. The C4-type zinc finger occupies 51–73 (CDNCENMLYVRFLRQNKRICEEC).

This sequence belongs to the AccD/PCCB family. Acetyl-CoA carboxylase is a heterohexamer composed of biotin carboxyl carrier protein, biotin carboxylase and 2 subunits each of ACCase subunit alpha and ACCase plastid-coded subunit beta (accD). The cofactor is Zn(2+).

Its subcellular location is the plastid. It is found in the chloroplast stroma. It catalyses the reaction N(6)-carboxybiotinyl-L-lysyl-[protein] + acetyl-CoA = N(6)-biotinyl-L-lysyl-[protein] + malonyl-CoA. The protein operates within lipid metabolism; malonyl-CoA biosynthesis; malonyl-CoA from acetyl-CoA: step 1/1. Functionally, component of the acetyl coenzyme A carboxylase (ACC) complex. Biotin carboxylase (BC) catalyzes the carboxylation of biotin on its carrier protein (BCCP) and then the CO(2) group is transferred by the transcarboxylase to acetyl-CoA to form malonyl-CoA. This Marchantia polymorpha (Common liverwort) protein is Acetyl-coenzyme A carboxylase carboxyl transferase subunit beta, chloroplastic.